A 573-amino-acid polypeptide reads, in one-letter code: Arylsulfatase I (573 aa).

Positions methionine 1 to alanine 23 are cleaved as a signal peptide. 3 residues coordinate Ca(2+): aspartate 55, aspartate 56, and cysteine 93. Cysteine 93 functions as the Nucleophile in the catalytic mechanism. Cysteine 93 carries the post-translational modification 3-oxoalanine (Cys). Substrate is bound at residue lysine 147. Histidine 149 is an active-site residue. Residue histidine 239 coordinates substrate. 2 N-linked (GlcNAc...) asparagine glycosylation sites follow: asparagine 276 and asparagine 288. 2 residues coordinate Ca(2+): aspartate 297 and asparagine 298. Lysine 315 contacts substrate. 2 N-linked (GlcNAc...) asparagine glycosylation sites follow: asparagine 466 and asparagine 496. The disordered stretch occupies residues alanine 506–lysine 550. A compositionally biased stretch (acidic residues) spans serine 525 to glutamate 537.

This sequence belongs to the sulfatase family. It depends on Ca(2+) as a cofactor. Post-translationally, the oxidation of Cys-93 residue to 3-oxoalanine (also known as C(alpha)-formylglycine) by SUMF1/Sulfatase-modifying factor 1, seems critical for catalytic activity.

It localises to the secreted. Its subcellular location is the endoplasmic reticulum. In terms of biological role, displays arylsulfatase activity at neutral pH, when co-expressed with SUMF1; arylsulfatase activity is measured in the secretion medium of retinal cell line, but no activity is recorded when measured in cell extracts. The protein is Arylsulfatase I (Arsi) of Rattus norvegicus (Rat).